The primary structure comprises 183 residues: Transcription factor E (183 aa).

In terms of domain architecture, HTH TFE/IIEalpha-type spans 4-97; the sequence is YIELVRRYVY…SWSIKDEDIR (94 aa).

This sequence belongs to the TFE family. As to quaternary structure, monomer. Interaction with RNA polymerase subunits RpoF and RpoE is necessary for Tfe stimulatory transcription activity. Able to interact with Tbp and RNA polymerase in the absence of DNA promoter. Interacts both with the preinitiation and elongation complexes.

Transcription factor that plays a role in the activation of archaeal genes transcribed by RNA polymerase. Facilitates transcription initiation by enhancing TATA-box recognition by TATA-box-binding protein (Tbp), and transcription factor B (Tfb) and RNA polymerase recruitment. Not absolutely required for transcription in vitro, but particularly important in cases where Tbp or Tfb function is not optimal. It dynamically alters the nucleic acid-binding properties of RNA polymerases by stabilizing the initiation complex and destabilizing elongation complexes. Seems to translocate with the RNA polymerase following initiation and acts by binding to the non template strand of the transcription bubble in elongation complexes. This chain is Transcription factor E, found in Caldivirga maquilingensis (strain ATCC 700844 / DSM 13496 / JCM 10307 / IC-167).